The following is a 423-amino-acid chain: COP9 signalosome complex subunit 3 (423 aa).

The region spanning 197 to 365 (NFERALYFFE…GMVCFHDNPE (169 aa)) is the PCI domain. Residues 402–423 (QFVQKSMGTQEDDVGSKTSSYS) are disordered.

This sequence belongs to the CSN3 family. Component of the CSN complex, probably composed of cops1, cops2, cops3, cops4, cops5, cops6, cops7, cops8 and cops9.

Its subcellular location is the cytoplasm. The protein resides in the nucleus. Component of the COP9 signalosome complex (CSN), a complex involved in various cellular and developmental processes. The CSN complex is an essential regulator of the ubiquitin (Ubl) conjugation pathway by mediating the deneddylation of the cullin subunits of E3 ligase complexes, leading to modify the Ubl ligase activity. In Danio rerio (Zebrafish), this protein is COP9 signalosome complex subunit 3 (cops3).